The chain runs to 297 residues: Acetylglutamate kinase (297 aa).

Substrate is bound by residues 64–65, Arg86, and Asn190; that span reads GG.

The protein belongs to the acetylglutamate kinase family. ArgB subfamily.

It is found in the cytoplasm. The catalysed reaction is N-acetyl-L-glutamate + ATP = N-acetyl-L-glutamyl 5-phosphate + ADP. The protein operates within amino-acid biosynthesis; L-arginine biosynthesis; N(2)-acetyl-L-ornithine from L-glutamate: step 2/4. In terms of biological role, catalyzes the ATP-dependent phosphorylation of N-acetyl-L-glutamate. This is Acetylglutamate kinase from Solidesulfovibrio magneticus (strain ATCC 700980 / DSM 13731 / RS-1) (Desulfovibrio magneticus).